The sequence spans 154 residues: uncharacterized protein (154 aa).

The HTH marR-type domain occupies 14–146; that stretch reads AMNLYRVFAR…LIVLLKKAGI (133 aa). The H-T-H motif DNA-binding region spans 60 to 83; it reads LQQIGSRLLLVSGNVTYVIDKLER.

This is an uncharacterized protein from Bacillus subtilis (strain 168).